The primary structure comprises 519 residues: Maturase K (519 aa).

This sequence belongs to the intron maturase 2 family. MatK subfamily.

The protein localises to the plastid. Its subcellular location is the chloroplast. Usually encoded in the trnK tRNA gene intron. Probably assists in splicing its own and other chloroplast group II introns. This chain is Maturase K, found in Aesculus pavia (Red buckeye).